The sequence spans 196 residues: ATP-dependent Clp protease proteolytic subunit (196 aa).

Catalysis depends on serine 101, which acts as the Nucleophile. Histidine 126 is a catalytic residue.

Belongs to the peptidase S14 family. As to quaternary structure, component of the chloroplastic Clp protease core complex.

It is found in the plastid. The protein resides in the chloroplast stroma. It carries out the reaction Hydrolysis of proteins to small peptides in the presence of ATP and magnesium. alpha-casein is the usual test substrate. In the absence of ATP, only oligopeptides shorter than five residues are hydrolyzed (such as succinyl-Leu-Tyr-|-NHMec, and Leu-Tyr-Leu-|-Tyr-Trp, in which cleavage of the -Tyr-|-Leu- and -Tyr-|-Trp bonds also occurs).. Its function is as follows. Cleaves peptides in various proteins in a process that requires ATP hydrolysis. Has a chymotrypsin-like activity. Plays a major role in the degradation of misfolded proteins. The polypeptide is ATP-dependent Clp protease proteolytic subunit (Citrus sinensis (Sweet orange)).